The sequence spans 173 residues: NADH-ubiquinone oxidoreductase chain 6 (173 aa).

The next 5 helical transmembrane spans lie at 1-21 (MTYLVSLFLLGLVLGLVAVAS), 24-44 (APYFAALGLVVAAGVGCGVLV), 53-73 (LVLFLIYLGGMLVVFAYSAAL), 87-107 (VLGYVVVYTVGVVLVAGLFWG), and 141-161 (GGMLIACAWVLLLTLFVVLEL).

It belongs to the complex I subunit 6 family.

Its subcellular location is the mitochondrion membrane. The catalysed reaction is a ubiquinone + NADH + 5 H(+)(in) = a ubiquinol + NAD(+) + 4 H(+)(out). Core subunit of the mitochondrial membrane respiratory chain NADH dehydrogenase (Complex I) that is believed to belong to the minimal assembly required for catalysis. Complex I functions in the transfer of electrons from NADH to the respiratory chain. The immediate electron acceptor for the enzyme is believed to be ubiquinone. In Oncorhynchus mykiss (Rainbow trout), this protein is NADH-ubiquinone oxidoreductase chain 6 (MT-ND6).